Here is a 400-residue protein sequence, read N- to C-terminus: Mu-type opioid receptor (400 aa).

At 1-68 the chain is on the extracellular side; it reads MDSSAVPANA…CPPTGSPSMI (68 aa). 5 N-linked (GlcNAc...) asparagine glycosylation sites follow: Asn-9, Asn-12, Asn-33, Asn-40, and Asn-48. The chain crosses the membrane as a helical span at residues 69–93; the sequence is TAITIMALYSIVCVVGLFGNFLVMY. Topologically, residues 94–106 are cytoplasmic; the sequence is VIVRYTKMKTATN. Residues 107–131 traverse the membrane as a helical segment; it reads IYIFNLALADALATSTLPFQSVNYL. Residues 132–142 are Extracellular-facing; sequence MGTWPFGTILC. Cys-142 and Cys-219 form a disulfide bridge. The helical transmembrane segment at 143–165 threads the bilayer; the sequence is KIVISIDYYNMFTSIFTLCTMSV. The Cytoplasmic segment spans residues 166 to 185; sequence DRYIAVCHPVKALDFRTPRN. A Phosphotyrosine modification is found at Tyr-168. Residues 186 to 207 traverse the membrane as a helical segment; it reads AKIVNVCNWIISSAIGLPVMFM. The Extracellular segment spans residues 208 to 230; that stretch reads ATTKYRQGSIDCTLTFSHPTWYW. A helical membrane pass occupies residues 231–255; that stretch reads ENLLKICVFIFAFIMPVLIITVCYG. Over 256–279 the chain is Cytoplasmic; the sequence is LMILRLKSVRMLSGSKEKDRNLRR. Residues 280–306 traverse the membrane as a helical segment; that stretch reads ITRMVLVVVAVFIVCWTPIHIYVIIKA. Over 307-314 the chain is Extracellular; that stretch reads LVTIPETT. Residues 315–338 form a helical membrane-spanning segment; the sequence is FQTVSWHFCIALGYTNSCLNPVLY. Positions 334-338 match the NPxxY; plays a role in stabilizing the activated conformation of the receptor motif; it reads NPVLY. Topologically, residues 339-400 are cytoplasmic; it reads AFLDENFKRC…NLEAETAPLP (62 aa). A lipid anchor (S-palmitoyl cysteine) is attached at Cys-353. Ser-365 bears the Phosphoserine mark. The residue at position 372 (Thr-372) is a Phosphothreonine. Ser-377 bears the Phosphoserine mark. Thr-396 is subject to Phosphothreonine.

It belongs to the G-protein coupled receptor 1 family. In terms of assembly, forms homooligomers and heterooligomers with other GPCRs, such as OPRD1, OPRK1, OPRL1, NPFFR2, ADRA2A, SSTR2, CNR1 and CCR5 (probably in dimeric forms). Interacts with heterotrimeric G proteins; interaction with a heterotrimeric complex containing GNAI1, GNB1 and GNG2 stabilizes the active conformation of the receptor and increases its affinity for endomorphin-2, the synthetic opioid peptide DAMGO and for morphinan agonists. Interacts with PPL; the interaction disrupts agonist-mediated G-protein activation. Interacts (via C-terminus) with DNAJB4 (via C-terminus). Interacts with calmodulin; the interaction inhibits the constitutive activity of OPRM1; it abolishes basal and attenuates agonist-stimulated G-protein coupling. Interacts with FLNA, PLD2, RANBP9 and WLS and GPM6A. Interacts with RTP4. Interacts with SYP and GNAS. Interacts with RGS9, RGS17, RGS20, RGS4, PPP1R9B and HINT1. Post-translationally, phosphorylated. Differentially phosphorylated in basal and agonist-induced conditions. Agonist-mediated phosphorylation modulates receptor internalization. Phosphorylated by GRK2 in a agonist-dependent manner. Phosphorylation at Tyr-168 requires receptor activation, is dependent on non-receptor protein tyrosine kinase Src and results in a decrease in agonist efficacy by reducing G-protein coupling efficiency. Phosphorylated on tyrosine residues; the phosphorylation is involved in agonist-induced G-protein-independent receptor down-regulation. Phosphorylation at Ser-377 is involved in G-protein-dependent but not beta-arrestin-dependent activation of the ERK pathway. Ubiquitinated. A basal ubiquitination seems not to be related to degradation. Ubiquitination is increased upon formation of OPRM1:OPRD1 oligomers leading to proteasomal degradation; the ubiquitination is diminished by RTP4.

Its subcellular location is the cell membrane. It localises to the cell projection. It is found in the axon. The protein resides in the perikaryon. The protein localises to the dendrite. Its subcellular location is the endosome. In terms of biological role, receptor for endogenous opioids such as beta-endorphin and endomorphin. Receptor for natural and synthetic opioids including morphine, heroin, DAMGO, fentanyl, etorphine, buprenorphin and methadone. Also activated by enkephalin peptides, such as Met-enkephalin or Met-enkephalin-Arg-Phe, with higher affinity for Met-enkephalin-Arg-Phe. Agonist binding to the receptor induces coupling to an inactive GDP-bound heterotrimeric G-protein complex and subsequent exchange of GDP for GTP in the G-protein alpha subunit leading to dissociation of the G-protein complex with the free GTP-bound G-protein alpha and the G-protein beta-gamma dimer activating downstream cellular effectors. The agonist- and cell type-specific activity is predominantly coupled to pertussis toxin-sensitive G(i) and G(o) G alpha proteins, GNAI1, GNAI2, GNAI3 and GNAO1, and to a lesser extent to pertussis toxin-insensitive G alpha proteins GNAZ and GNA15. They mediate an array of downstream cellular responses, including inhibition of adenylate cyclase activity and both N-type and L-type calcium channels, activation of inward rectifying potassium channels, mitogen-activated protein kinase (MAPK), phospholipase C (PLC), phosphoinositide/protein kinase (PKC), phosphoinositide 3-kinase (PI3K) and regulation of NF-kappa-B. Also couples to adenylate cyclase stimulatory G alpha proteins. The selective temporal coupling to G-proteins and subsequent signaling can be regulated by RGSZ proteins, such as RGS9, RGS17 and RGS4. Phosphorylation by members of the GPRK subfamily of Ser/Thr protein kinases and association with beta-arrestins is involved in short-term receptor desensitization. Beta-arrestins associate with the GPRK-phosphorylated receptor and uncouple it from the G-protein thus terminating signal transduction. The phosphorylated receptor is internalized through endocytosis via clathrin-coated pits which involves beta-arrestins. The activation of the ERK pathway occurs either in a G-protein-dependent or a beta-arrestin-dependent manner and is regulated by agonist-specific receptor phosphorylation. Acts as a class A G-protein coupled receptor (GPCR) which dissociates from beta-arrestin at or near the plasma membrane and undergoes rapid recycling. Receptor down-regulation pathways are varying with the agonist and occur dependent or independent of G-protein coupling. Endogenous ligands induce rapid desensitization, endocytosis and recycling. Heterooligomerization with other GPCRs can modulate agonist binding, signaling and trafficking properties. Involved in neurogenesis. The chain is Mu-type opioid receptor (OPRM1) from Saimiri boliviensis boliviensis (Bolivian squirrel monkey).